Consider the following 237-residue polypeptide: uncharacterized protein (237 aa).

The N-acetyltransferase domain occupies 119–237 (VTVRRLTPTD…PAGLDGGLPA (119 aa)).

This is an uncharacterized protein from Streptomyces virginiae (Streptomyces cinnamonensis).